Consider the following 276-residue polypeptide: Ribonuclease 3 (276 aa).

The interval 1–29 (MRGTVSVPKKAEDAKADPPAKKKADTQAS) is disordered. Basic and acidic residues predominate over residues 9-25 (KKAEDAKADPPAKKKAD). The region spanning 31 to 157 (HTLLEGRLGY…VIGAVYLDQG (127 aa)) is the RNase III domain. Glutamate 70 contacts Mg(2+). Aspartate 74 is a catalytic residue. The Mg(2+) site is built by aspartate 143 and glutamate 146. Glutamate 146 is a catalytic residue. The DRBM domain occupies 184–252 (DWKTSLQELT…AESAWRSIRA (69 aa)). The disordered stretch occupies residues 227-276 (YGTGTGRSKKEAEQQAAESAWRSIRAAADERAKATADAVDADPDEASASA). Residues 265–276 (VDADPDEASASA) are compositionally biased toward acidic residues.

This sequence belongs to the ribonuclease III family. In terms of assembly, homodimer. Requires Mg(2+) as cofactor.

The protein resides in the cytoplasm. The enzyme catalyses Endonucleolytic cleavage to 5'-phosphomonoester.. Digests double-stranded RNA. Involved in the processing of primary rRNA transcript to yield the immediate precursors to the large and small rRNAs (23S and 16S). Also processes some mRNAs, and tRNAs when they are encoded in the rRNA operon. May modulate key aspects of gene expression as its absence has extensive effects on the abundance of about 200 different transcripts. Probably processes pre-crRNA and tracrRNA of type II CRISPR loci if present in the organism. In Streptomyces coelicolor (strain ATCC BAA-471 / A3(2) / M145), this protein is Ribonuclease 3 (rnc).